The following is a 317-amino-acid chain: L-lactate dehydrogenase (317 aa).

Residues Val-17, Asp-38, Lys-43, Tyr-69, and 83 to 84 (GA) contribute to the NAD(+) site. Residues Gln-86 and Arg-92 each coordinate substrate. NAD(+)-binding positions include Ser-105, 122–124 (ATN), and Ser-147. 124–127 (NPVD) contacts substrate. 152 to 155 (DTAR) lines the substrate pocket. 2 residues coordinate beta-D-fructose 1,6-bisphosphate: Arg-157 and His-172. The active-site Proton acceptor is His-179. A Phosphotyrosine modification is found at Tyr-224. Thr-233 provides a ligand contact to substrate.

It belongs to the LDH/MDH superfamily. LDH family. In terms of assembly, homotetramer.

Its subcellular location is the cytoplasm. It catalyses the reaction (S)-lactate + NAD(+) = pyruvate + NADH + H(+). It functions in the pathway fermentation; pyruvate fermentation to lactate; (S)-lactate from pyruvate: step 1/1. Allosterically activated by fructose 1,6-bisphosphate (FBP). Its function is as follows. Catalyzes the conversion of lactate to pyruvate. This is L-lactate dehydrogenase from Bacillus caldotenax.